We begin with the raw amino-acid sequence, 393 residues long: Geranylgeranyl pyrophosphate synthase 2 (393 aa).

Residues lysine 109, arginine 112, and histidine 141 each coordinate isopentenyl diphosphate. Mg(2+) is bound by residues aspartate 148 and aspartate 152. Arginine 157 serves as a coordination point for dimethylallyl diphosphate. Arginine 158 serves as a coordination point for isopentenyl diphosphate. 3 residues coordinate dimethylallyl diphosphate: lysine 235, threonine 236, and glutamine 275. Aspartate 278 contributes to the Mg(2+) binding site. Residues asparagine 282, lysine 292, and lysine 302 each contribute to the dimethylallyl diphosphate site.

Belongs to the FPP/GGPP synthase family. Requires Mg(2+) as cofactor.

The catalysed reaction is isopentenyl diphosphate + dimethylallyl diphosphate = (2E)-geranyl diphosphate + diphosphate. It catalyses the reaction isopentenyl diphosphate + (2E)-geranyl diphosphate = (2E,6E)-farnesyl diphosphate + diphosphate. The enzyme catalyses isopentenyl diphosphate + (2E,6E)-farnesyl diphosphate = (2E,6E,10E)-geranylgeranyl diphosphate + diphosphate. The protein operates within plant hormone biosynthesis; gibberellin biosynthesis. In terms of biological role, geranylgeranyl pyrophosphate synthase; part of the gene cluster that mediates the biosynthesis of gibberellins (GAs), diterpenoids that may provide a selective advantage during infection of the preferred host plant, rice. Gibberellins (GAs) are diterpenoids and are synthesized via the mevalonate pathway. Biosynthesis of the major metabolite GA3 (gibberellic acid) from geranylgeranyl diphosphate (GGPP) requires 13 steps. The GGPP produced by the geranylgeranyl diphosphate synthase GGS2 is converted to ent-kaurene via ent-copalyldiphosphate in a two-step cyclization reaction performed by the bifunctional ent-copalyl diphosphate synthase/ent-kaurene synthase enzyme (CPS/KS). Ent-Kaurene is metabolized to GAs by a series of oxidation reactions catalyzed by cytochrome P450 monooxygenases. Cytochrome P450 monooxygenase P450-4 is an ent-kaurene oxidase that catalyzes the three oxidation steps between ent-kaurene and ent-kaurenoic acid. The highly multifunctional cytochrome P450 monooxygenase P450-1 then catalyzes four steps involving oxidation at two carbon atoms, in the main pathway from ent-kaurenoic acid to GA14 via GA12-aldehyde as well as producing kaurenolides and fujenoic acids as by-products. The cytochrome P450 monooxygenase P450-2 then converts GA14 to GA4 by removal of C-20. GA4 is further converted to GA7 by the GA4 desaturase DES via 1,2-desaturation before cytochrome P450 monooxygenase P450-3, a 13-hydroxylase, hydroxylates GA7 to GA3, the final product of the GA-biosynthetic pathway. The polypeptide is Geranylgeranyl pyrophosphate synthase 2 (Gibberella fujikuroi (strain CBS 195.34 / IMI 58289 / NRRL A-6831) (Bakanae and foot rot disease fungus)).